The chain runs to 426 residues: Dihydropyrimidine dehydrogenase (NADP(+)), chloroplastic (426 aa).

The N-terminal 44 residues, 1–44 (MASMSFALNRFSGLSSKTTLSADFDPSSRRSFLPPTRVGLKISS), are a transit peptide targeting the chloroplast. Ala-45 bears the N-acetylalanine mark. Residues Asn-129 and 188 to 190 (NFS) contribute to the substrate site. The Nucleophile role is filled by Cys-191. Residue 256-257 (NT) participates in substrate binding. The tract at residues 395–414 (VEQRKAEKRGLKSDKDWTGD) is disordered.

It belongs to the dihydropyrimidine dehydrogenase family. In terms of tissue distribution, expressed in roots, leaves, stems, siliques and flowers. Highly expressed ion dry seeds.

Its subcellular location is the plastid. The protein localises to the chloroplast. It carries out the reaction 5,6-dihydrouracil + NADP(+) = uracil + NADPH + H(+). It functions in the pathway amino-acid biosynthesis; beta-alanine biosynthesis. Involved in pyrimidine base degradation. Catalyzes the reduction of uracil to 5,6-dihydrouracil (DHU) by using NADH as a specific cosubstrate and the reduction of thymine to 5,6-dihydrothymine (DHT). Involved in the recycling of nitrogen from nucleobases to general nitrogen metabolism. This chain is Dihydropyrimidine dehydrogenase (NADP(+)), chloroplastic, found in Arabidopsis thaliana (Mouse-ear cress).